The following is a 119-amino-acid chain: Small ribosomal subunit protein bS16 (119 aa).

Belongs to the bacterial ribosomal protein bS16 family.

The sequence is that of Small ribosomal subunit protein bS16 from Chlamydia caviae (strain ATCC VR-813 / DSM 19441 / 03DC25 / GPIC) (Chlamydophila caviae).